Here is a 403-residue protein sequence, read N- to C-terminus: Argininosuccinate synthase (403 aa).

Residues 12–20 (AYSGGLDTS) and Ala-39 each bind ATP. Positions 90 and 95 each coordinate L-citrulline. Residue Gly-120 participates in ATP binding. L-aspartate-binding residues include Thr-122, Asn-126, and Asp-127. Asn-126 is a binding site for L-citrulline. Arg-130, Ser-182, Ser-191, Glu-267, and Tyr-279 together coordinate L-citrulline.

Belongs to the argininosuccinate synthase family. Type 1 subfamily. As to quaternary structure, homotetramer.

The protein localises to the cytoplasm. The catalysed reaction is L-citrulline + L-aspartate + ATP = 2-(N(omega)-L-arginino)succinate + AMP + diphosphate + H(+). It participates in amino-acid biosynthesis; L-arginine biosynthesis; L-arginine from L-ornithine and carbamoyl phosphate: step 2/3. This is Argininosuccinate synthase from Vesicomyosocius okutanii subsp. Calyptogena okutanii (strain HA).